The following is a 177-amino-acid chain: Adenine phosphoribosyltransferase (177 aa).

The protein belongs to the purine/pyrimidine phosphoribosyltransferase family. In terms of assembly, homodimer.

The protein resides in the cytoplasm. The catalysed reaction is AMP + diphosphate = 5-phospho-alpha-D-ribose 1-diphosphate + adenine. It functions in the pathway purine metabolism; AMP biosynthesis via salvage pathway; AMP from adenine: step 1/1. Catalyzes a salvage reaction resulting in the formation of AMP, that is energically less costly than de novo synthesis. This is Adenine phosphoribosyltransferase from Chlorobaculum parvum (strain DSM 263 / NCIMB 8327) (Chlorobium vibrioforme subsp. thiosulfatophilum).